The sequence spans 321 residues: Taste receptor type 2 member 135 (321 aa).

The Extracellular segment spans residues 1–28 (MGPIMSTGETSTAHTVLGCQITDKTVIT). Residues 29 to 49 (LFVILVFSCLVAVVGNGFIII) traverse the membrane as a helical segment. Over 50–75 (ALGMKWLLRRTLSAHNKLLISLAASR) the chain is Cytoplasmic. A helical transmembrane segment spans residues 76 to 96 (FCLQCVVIGKNIYVFLNPSSF). Residues 97 to 106 (PYNPVIQLLN) are Extracellular-facing. The chain crosses the membrane as a helical span at residues 107-127 (LMWDFLTAATIWFCSLLGFFY). Residues 128–149 (CVKIATLTHPVFVWLKYRLPGW) are Cytoplasmic-facing. Residues 150 to 170 (VPWMLLSAVGMSSLTSILCFI) form a helical membrane-spanning segment. Over 171–207 (GNHMIYQNYARRGHQPWNATGNSLRHSLEKFYFISIK) the chain is Extracellular. A glycan (N-linked (GlcNAc...) asparagine) is linked at asparagine 188. Residues 208–228 (IIMWTVPTVIFSIFMSLLLVS) form a helical membrane-spanning segment. Over 229–253 (LVRHMKKTLLALSELRDVWAQAHFK) the chain is Cytoplasmic. A helical transmembrane segment spans residues 254–274 (ALLPLLSFIILFISCFLTLVL). Over 275-286 (SSASSTPYQEFR) the chain is Extracellular. A helical transmembrane segment spans residues 287–307 (YWMWQVVIHLCTVIHPIVILL). At 308 to 321 (SNPVLRVVMKRGCC) the chain is on the cytoplasmic side.

The protein belongs to the G-protein coupled receptor T2R family.

The protein resides in the membrane. In terms of biological role, putative taste receptor which may play a role in the perception of bitterness. In Rattus norvegicus (Rat), this protein is Taste receptor type 2 member 135.